A 252-amino-acid polypeptide reads, in one-letter code: MTVMDLNSDVGEPFGAWGMGDDAAVFRSVSSANVACGFHAGDPSVMAQTCRDAVAAGVTVGAHVAYRDLAGFGRRFLDCSPTELADDVLYQMGALEAVARAAGTTVRYVKPHGALYNTIVHHEAHAQAVVNAVKAFGGDLPLLLLPGSAALRAAEKAGLRAVPEAFADRGYTPEGTLVSRRDPGAVLHDAAQVTERMVRLAEDGTLTAVDGSTVRIHAESICVHGDTPGAAAMAAEVRAGLDRAGITVRSFA.

It belongs to the LamB/PxpA family. In terms of assembly, forms a complex composed of PxpA, PxpB and PxpC.

The catalysed reaction is 5-oxo-L-proline + ATP + 2 H2O = L-glutamate + ADP + phosphate + H(+). Catalyzes the cleavage of 5-oxoproline to form L-glutamate coupled to the hydrolysis of ATP to ADP and inorganic phosphate. The sequence is that of 5-oxoprolinase subunit A from Kocuria rhizophila (strain ATCC 9341 / DSM 348 / NBRC 103217 / DC2201).